The sequence spans 156 residues: Small ribosomal subunit protein uS7 (156 aa).

This sequence belongs to the universal ribosomal protein uS7 family. Part of the 30S ribosomal subunit. Contacts proteins S9 and S11.

In terms of biological role, one of the primary rRNA binding proteins, it binds directly to 16S rRNA where it nucleates assembly of the head domain of the 30S subunit. Is located at the subunit interface close to the decoding center, probably blocks exit of the E-site tRNA. The chain is Small ribosomal subunit protein uS7 from Pelobacter propionicus (strain DSM 2379 / NBRC 103807 / OttBd1).